Reading from the N-terminus, the 940-residue chain is Serine/threonine-protein phosphatase 1 regulatory subunit 10 (940 aa).

Positions 1-348 (MGSGPIDPKE…EPAPPSEAMD (348 aa)) are interaction with TOX4. Positions 73–147 (KLLNNWLTYS…SDWMAVIRSQ (75 aa)) constitute a TFIIS N-terminal domain. Disordered stretches follow at residues 147-211 (QSST…FRST), 247-270 (SNVA…NTTP), 304-400 (KIKK…KSVT), and 533-905 (YVET…HGGD). 2 stretches are compositionally biased toward basic and acidic residues: residues 153-166 (AEKD…EGKS) and 174-196 (PLTE…EKPK). Residue K179 forms a Glycyl lysine isopeptide (Lys-Gly) (interchain with G-Cter in SUMO2) linkage. T256 bears the Phosphothreonine mark. A Glycyl lysine isopeptide (Lys-Gly) (interchain with G-Cter in SUMO2) cross-link involves residue K262. S313 carries the phosphoserine modification. The span at 325–336 (KTSTEPSTAKPS) shows a compositional bias: low complexity. Positions 357-433 (PPVEVPELMD…NKIKDFGEAA (77 aa)) are necessary for interaction with PPP1CA. At S382 the chain carries Phosphoserine. Positions 393 to 408 (GRKRKSVTWPEEGKLR) are necessary for interaction with PPP1CC. Residues 394 to 423 (RKRKSVTWPEEGKLREYFYFELDETERVNV) carry the PP1-binding motif motif. Phosphoserine; by PKA is present on S398. The interval 418–619 (TERVNVNKIK…IKQMLVPHGL (202 aa)) is interaction with WDR82. Composition is skewed to gly residues over residues 540–551 (GGSGGSPDGAGG) and 565–579 (MGAG…GGGI). Position 545 is a phosphoserine (S545). Polar residues predominate over residues 583–595 (EILTSIMGSPNSH). S591 carries the post-translational modification Phosphoserine. Positions 596–611 (PSEELLKQPDYSDKIK) are enriched in basic and acidic residues. The span at 644–655 (PPGPGGPMPGPH) shows a compositional bias: pro residues. R665 bears the Omega-N-methylarginine mark. Residues 676–690 (GDPFWDGPGDPMRGG) show a composition bias toward low complexity. The residue at position 693 (R693) is an Omega-N-methylarginine. The span at 714–723 (EPPPPPPPPF) shows a compositional bias: pro residues. Composition is skewed to gly residues over residues 726–764 (ARGG…GMGN) and 790–845 (SSMG…GSGG). R739 is subject to Omega-N-methylarginine. Basic and acidic residues-rich tracts occupy residues 862–886 (PHDV…HDGP) and 894–903 (RGHDGGHSHG). The C3H1-type zinc finger occupies 906 to 934 (MSNRPVCRHFMMKGNCRYENNCAFYHPGV).

Component of the PNUTS-PP1 complex (also named PTW/PP1 complex), composed of PPP1R10/PNUTS, TOX4, WDR82, and PPP1CA (or PPP1CB or PPP1CC). In terms of processing, phosphorylated on Ser-398 by PKA within the region necessary for interaction with PPP1CA.

Its subcellular location is the nucleus. The protein resides in the chromosome. In terms of biological role, substrate-recognition component of the PNUTS-PP1 protein phosphatase complex, a protein phosphatase 1 (PP1) complex that promotes RNA polymerase II transcription pause-release, allowing transcription elongation. Promoter-proximal pausing by RNA polymerase II is a transcription halt following transcription initiation but prior to elongation, which acts as a checkpoint to control that transcripts are favorably configured for transcriptional elongation. The PNUTS-PP1 complex mediates the release of RNA polymerase II from promoter-proximal region of genes by catalyzing dephosphorylation of proteins involved in transcription, such as AFF4, CDK9, MEPCE, INTS12, NCBP1, POLR2M/GDOWN1 and SUPT6H. The PNUTS-PP1 complex also regulates RNA polymerase II transcription termination by mediating dephosphorylation of SUPT5H in termination zones downstream of poly(A) sites, thereby promoting deceleration of RNA polymerase II transcription. PNUTS-PP1 complex is also involved in the response to replication stress by mediating dephosphorylation of POLR2A at 'Ser-5' of the CTD, promoting RNA polymerase II degradation. The PNUTS-PP1 complex also plays a role in the control of chromatin structure and cell cycle progression during the transition from mitosis into interphase. PNUTS-PP1 complex mediates dephosphorylation of MYC, promoting MYC stability by preventing MYC ubiquitination by the SCF(FBXW7) complex. In addition to acts as a substrate-recognition component, PPP1R10/PNUTS also acts as a nuclear targeting subunit for the PNUTS-PP1 complex. In some context, PPP1R10/PNUTS also acts as an inhibitor of protein phosphatase 1 (PP1) activity by preventing access to substrates, such as RB. In Macaca mulatta (Rhesus macaque), this protein is Serine/threonine-protein phosphatase 1 regulatory subunit 10 (PPP1R10).